Here is a 408-residue protein sequence, read N- to C-terminus: Glutathione-independent formaldehyde dehydrogenase (408 aa).

Cysteine 61 lines the Zn(2+) pocket. 3 residues coordinate NAD(+): glycine 62, serine 63, and histidine 66. Residues histidine 82, cysteine 112, cysteine 115, cysteine 118, cysteine 126, and aspartate 184 each contribute to the Zn(2+) site. Valine 212, aspartate 232, arginine 237, valine 277, histidine 284, proline 311, leucine 313, glycine 348, and threonine 350 together coordinate NAD(+).

This sequence belongs to the zinc-containing alcohol dehydrogenase family. Zn(2+) is required as a cofactor.

The catalysed reaction is formaldehyde + NAD(+) + H2O = formate + NADH + 2 H(+). With respect to regulation, activity is not inhibited by EDTA, which is probably not sufficient to displace the bound metal. Its function is as follows. Dehydrogenase that catalyzes the NAD(+)-dependent oxidation of formaldehyde. Exhibits lower activity with acetaldehyde (about 10-fold lower than for formaldehyde), but cannot use methanol, ethanol, 1-butanol, glyoxal or formic acid. Is involved in formaldehyde detoxification. This is Glutathione-independent formaldehyde dehydrogenase from Bacillus subtilis (strain 168).